A 309-amino-acid chain; its full sequence is Histidine protein methyltransferase 1 homolog (309 aa).

Disordered stretches follow at residues 1–37 and 79–111; these read MSFK…FDSS and KPFK…NNKD. The span at 25-37 shows a compositional bias: basic and acidic residues; that stretch reads EESKLDISEFDSS. The span at 84-109 shows a compositional bias: low complexity; that stretch reads NQDNNNDNNVNSNDKNDNNNNNNNNN. S-adenosyl-L-methionine-binding positions include 132 to 136, G159, 179 to 181, 209 to 211, and S229; these read LWECS, QDY, and GDW.

The protein belongs to the methyltransferase superfamily. METTL18 family.

The protein localises to the cytoplasm. It is found in the cytosol. It localises to the nucleus. Its subcellular location is the nucleolus. It catalyses the reaction L-histidyl-[protein] + S-adenosyl-L-methionine = N(tele)-methyl-L-histidyl-[protein] + S-adenosyl-L-homocysteine + H(+). Protein-L-histidine N-tele-methyltransferase that probably monomethylates RPL3. Through the methylation of RPL3 may regulate the dynamics of pre-rRNA processing, ribosome biogenesis, and translation. The protein is Histidine protein methyltransferase 1 homolog of Dictyostelium discoideum (Social amoeba).